A 252-amino-acid chain; its full sequence is Protein BTG3 (252 aa).

The disordered stretch occupies residues 138–165 (VTSDYHSGSSSSDEETSKEVEVKPNSVT).

The protein belongs to the BTG family.

Functionally, overexpression impairs serum-induced cell cycle progression from the G0/G1 to S phase. In Sus scrofa (Pig), this protein is Protein BTG3 (BTG3).